The primary structure comprises 450 residues: Tubulin alpha chain (450 aa).

Position 11 (Gln-11) interacts with GTP. N6-acetyllysine is present on Lys-40. GTP is bound by residues Glu-71, Ser-140, Gly-144, Thr-145, Thr-179, Asn-206, and Asn-228. A Mg(2+)-binding site is contributed by Glu-71. Glu-254 is a catalytic residue.

The protein belongs to the tubulin family. In terms of assembly, dimer of alpha and beta chains. A typical microtubule is a hollow water-filled tube with an outer diameter of 25 nm and an inner diameter of 15 nM. Alpha-beta heterodimers associate head-to-tail to form protofilaments running lengthwise along the microtubule wall with the beta-tubulin subunit facing the microtubule plus end conferring a structural polarity. Microtubules usually have 13 protofilaments but different protofilament numbers can be found in some organisms and specialized cells. It depends on Mg(2+) as a cofactor. In terms of processing, undergoes a tyrosination/detyrosination cycle, the cyclic removal and re-addition of a C-terminal tyrosine residue by the enzymes tubulin tyrosine carboxypeptidase (TTCP) and tubulin tyrosine ligase (TTL), respectively. Acetylation of alpha chains at Lys-40 stabilizes microtubules and affects affinity and processivity of microtubule motors. This modification has a role in multiple cellular functions, ranging from cell motility, cell cycle progression or cell differentiation to intracellular trafficking and signaling.

The protein localises to the cytoplasm. It is found in the cytoskeleton. It carries out the reaction GTP + H2O = GDP + phosphate + H(+). Its function is as follows. Tubulin is the major constituent of microtubules, a cylinder consisting of laterally associated linear protofilaments composed of alpha- and beta-tubulin heterodimers. Microtubules grow by the addition of GTP-tubulin dimers to the microtubule end, where a stabilizing cap forms. Below the cap, tubulin dimers are in GDP-bound state, owing to GTPase activity of alpha-tubulin. The protein is Tubulin alpha chain of Lepidoglyphus destructor (Storage mite).